Reading from the N-terminus, the 106-residue chain is MRRRSSMDINRAIRVAVDTGNVVLGTKQAIKNIKHGEGQLVIIADNCAKDVREDIFYYTQLSETPVYTHQATSIELGAICGKPFPVSALLVLEPGNSAILNVNNEE.

This sequence belongs to the eukaryotic ribosomal protein eL30 family.

This chain is Large ribosomal subunit protein eL30, found in Methanococcus maripaludis (strain C7 / ATCC BAA-1331).